The chain runs to 524 residues: Na(+)/H(+) antiporter NhaB (524 aa).

Helical transmembrane passes span 25-45, 97-117, 135-155, 234-254, 302-322, 352-372, 388-408, 445-465, and 474-494; these read IIAF…IAGW, LLLV…MFLF, IFAS…AVII, FVEF…FGLL, ALIG…VGLI, FTAL…QGLF, MVMF…VFVG, VATP…IAPL, and VMMA…ATYI.

This sequence belongs to the NhaB Na(+)/H(+) (TC 2.A.34) antiporter family.

It localises to the cell inner membrane. The catalysed reaction is 2 Na(+)(in) + 3 H(+)(out) = 2 Na(+)(out) + 3 H(+)(in). Na(+)/H(+) antiporter that extrudes sodium in exchange for external protons. This is Na(+)/H(+) antiporter NhaB from Alteromonas mediterranea (strain DSM 17117 / CIP 110805 / LMG 28347 / Deep ecotype).